The sequence spans 109 residues: Ubiquitin-related modifier 1 homolog (109 aa).

A 1-thioglycine modification is found at Gly109. Gly109 is covalently cross-linked (Glycyl lysine isopeptide (Gly-Lys) (interchain with K-? in acceptor proteins)).

This sequence belongs to the URM1 family. C-terminal thiocarboxylation occurs in 2 steps, it is first acyl-adenylated (-COAMP) via the hesA/moeB/thiF part of the MOCS3 homolog, then thiocarboxylated (-COSH) via the rhodanese domain of the MOCS3 homolog.

It is found in the cytoplasm. Its pathway is tRNA modification; 5-methoxycarbonylmethyl-2-thiouridine-tRNA biosynthesis. Acts as a sulfur carrier required for 2-thiolation of mcm(5)S(2)U at tRNA wobble positions of cytosolic tRNA(Lys), tRNA(Glu) and tRNA(Gln). Serves as sulfur donor in tRNA 2-thiolation reaction by being thiocarboxylated (-COSH) at its C-terminus by MOCS3. The sulfur is then transferred to tRNA to form 2-thiolation of mcm(5)S(2)U. Also acts as a ubiquitin-like protein (UBL) that is covalently conjugated via an isopeptide bond to lysine residues of target proteins. The thiocarboxylated form serves as substrate for conjugation and oxidative stress specifically induces the formation of UBL-protein conjugates. The polypeptide is Ubiquitin-related modifier 1 homolog (Culex quinquefasciatus (Southern house mosquito)).